The following is a 1031-amino-acid chain: Pre-mRNA-splicing factor SYF1 (1031 aa).

4 HAT repeats span residues 28–60 (HLIP…NVKE), 90–122 (DGLQ…TRQS), 214–248 (KNGS…WAEI), and 250–269 (GGDA…PSLT). The tract at residues 346–368 (VEEKVDGEQPQVEGQEQQPQEEP) is disordered. The span at 353–368 (EQPQVEGQEQQPQEEP) shows a compositional bias: low complexity. 8 HAT repeats span residues 452–487 (GEFE…FSET), 610–646 (PDLE…MELR), 664–698 (PKNT…LEES), 700–732 (GTVE…FLEE), 734–768 (KYFE…KFVK), 773–807 (KKLE…LEEE), 845–879 (FGLP…MERK), and 881–915 (GEID…FEIE). Disordered stretches follow at residues 948-969 (AAAS…QDAA) and 1003-1031 (TNAN…EDEF).

This sequence belongs to the crooked-neck family. In terms of assembly, associated with the spliceosome.

The protein resides in the nucleus. Its function is as follows. Involved in pre-mRNA splicing and cell cycle progression. The sequence is that of Pre-mRNA-splicing factor SYF1 (SYF1) from Cryptococcus neoformans var. neoformans serotype D (strain B-3501A) (Filobasidiella neoformans).